The primary structure comprises 199 residues: ATP-dependent Clp protease proteolytic subunit (199 aa).

The active-site Nucleophile is the Ser-99. His-124 is an active-site residue.

The protein belongs to the peptidase S14 family. In terms of assembly, fourteen ClpP subunits assemble into 2 heptameric rings which stack back to back to give a disk-like structure with a central cavity, resembling the structure of eukaryotic proteasomes.

It is found in the cytoplasm. It catalyses the reaction Hydrolysis of proteins to small peptides in the presence of ATP and magnesium. alpha-casein is the usual test substrate. In the absence of ATP, only oligopeptides shorter than five residues are hydrolyzed (such as succinyl-Leu-Tyr-|-NHMec, and Leu-Tyr-Leu-|-Tyr-Trp, in which cleavage of the -Tyr-|-Leu- and -Tyr-|-Trp bonds also occurs).. In terms of biological role, cleaves peptides in various proteins in a process that requires ATP hydrolysis. Has a chymotrypsin-like activity. Plays a major role in the degradation of misfolded proteins. The sequence is that of ATP-dependent Clp protease proteolytic subunit from Moorella thermoacetica (strain ATCC 39073 / JCM 9320).